The primary structure comprises 978 residues: Alanine--tRNA ligase, chloroplastic/mitochondrial (978 aa).

Residues histidine 655, histidine 659, cysteine 758, and histidine 762 each coordinate Zn(2+). Lysine 773 participates in a covalent cross-link: Glycyl lysine isopeptide (Lys-Gly) (interchain with G-Cter in ubiquitin).

This sequence belongs to the class-II aminoacyl-tRNA synthetase family. As to quaternary structure, monomer. The cofactor is Zn(2+).

The protein resides in the plastid. It is found in the chloroplast. It localises to the mitochondrion. It carries out the reaction tRNA(Ala) + L-alanine + ATP = L-alanyl-tRNA(Ala) + AMP + diphosphate. Catalyzes the attachment of alanine to tRNA(Ala) in a two-step reaction: alanine is first activated by ATP to form Ala-AMP and then transferred to the acceptor end of tRNA(Ala). Also edits incorrectly charged tRNA(Ala) via its editing domain. The protein is Alanine--tRNA ligase, chloroplastic/mitochondrial (EMB86) of Arabidopsis thaliana (Mouse-ear cress).